Here is a 217-residue protein sequence, read N- to C-terminus: Transmembrane protein 247 (217 aa).

Residues 1–10 (MATEDREMME) show a composition bias toward basic and acidic residues. Residues 1 to 87 (MATEDREMME…GPATTKGQAG (87 aa)) form a disordered region. A coiled-coil region spans residues 109-154 (RERDAEMELEKVRMEFELKRLKYLHEENERQRQHEEVMEQLQQQAT). 2 consecutive transmembrane segments (helical) span residues 165–185 (LLLP…IHII) and 192–212 (IFFL…LCLI).

Its subcellular location is the membrane. This is Transmembrane protein 247 from Bos taurus (Bovine).